Here is a 217-residue protein sequence, read N- to C-terminus: Ribosomal RNA small subunit methyltransferase G (217 aa).

S-adenosyl-L-methionine is bound by residues G74, L79, 125-126 (IQ), and R143.

Belongs to the methyltransferase superfamily. RNA methyltransferase RsmG family.

It localises to the cytoplasm. It catalyses the reaction guanosine(527) in 16S rRNA + S-adenosyl-L-methionine = N(7)-methylguanosine(527) in 16S rRNA + S-adenosyl-L-homocysteine. Functionally, specifically methylates the N7 position of guanine in position 527 of 16S rRNA. The sequence is that of Ribosomal RNA small subunit methyltransferase G from Syntrophotalea carbinolica (strain DSM 2380 / NBRC 103641 / GraBd1) (Pelobacter carbinolicus).